Consider the following 287-residue polypeptide: Mitochondrial dicarboxylate carrier (287 aa).

3 Solcar repeats span residues 7-87 (SRWY…MRDY), 100-187 (NKVL…AKQL), and 196-279 (DNIF…LRKH). 3 helical membrane-spanning segments follow: residues 9-29 (WYFGGLASCGAACCTHPLDLL), 62-81 (GLSASLCRQMTYSLTRFAIY), and 102-122 (VLLGGISGLTGGFVGTPADLV). Lys158 bears the N6-acetyllysine mark. Helical transmembrane passes span 162–181 (GATMASSRGALVTVGQLSCY), 202–222 (FVSSFIAGGCATFLCQPLDVL), and 254–274 (GLFPAGIRLIPHTVLTFMFLE).

The protein belongs to the mitochondrial carrier (TC 2.A.29) family. As to expression, expressed at very high levels in white adipose tissue. And at low levels in brown adipose tissue, kidney and liver.

It is found in the mitochondrion inner membrane. It carries out the reaction (S)-malate(in) + phosphate(out) = (S)-malate(out) + phosphate(in). The catalysed reaction is malonate(out) + (S)-malate(in) = malonate(in) + (S)-malate(out). The enzyme catalyses (S)-malate(in) + succinate(out) = (S)-malate(out) + succinate(in). It catalyses the reaction (S)-malate(in) + sulfate(out) = (S)-malate(out) + sulfate(in). It carries out the reaction malonate(out) + phosphate(in) = malonate(in) + phosphate(out). The catalysed reaction is succinate(out) + phosphate(in) = succinate(in) + phosphate(out). The enzyme catalyses sulfate(out) + phosphate(in) = sulfate(in) + phosphate(out). It catalyses the reaction malonate(out) + succinate(in) = malonate(in) + succinate(out). With respect to regulation, regulated by circadian protein CLOCK (Circadian Locomotor Output Cycles Kaput). Functionally, catalyzes the electroneutral exchange or flux of physiologically important metabolites such as dicarboxylates (malonate, malate, succinate), inorganic sulfur-containing anions, and phosphate, across mitochondrial inner membrane. Plays an important role in gluconeogenesis, fatty acid metabolism, urea synthesis, and sulfur metabolism, particularly in liver, by supplying the substrates for the different metabolic processes. Regulates fatty acid release from adipocytes, and contributes to systemic insulin sensitivity. In Mus musculus (Mouse), this protein is Mitochondrial dicarboxylate carrier.